Consider the following 183-residue polypeptide: Peptide deformylase-like (183 aa).

Glutamate 140 is an active-site residue.

The protein belongs to the polypeptide deformylase family.

The polypeptide is Peptide deformylase-like (Rickettsia conorii (strain ATCC VR-613 / Malish 7)).